The following is a 418-amino-acid chain: Nuclear hormone receptor family member nhr-209 (418 aa).

The segment at residues 43-121 (PEKCAVCKNA…VGMDSTAIRA (79 aa)) is a DNA-binding region (nuclear receptor). 2 NR C4-type zinc fingers span residues 46 to 66 (CAVC…CNGC) and 82 to 104 (CMNH…CKGC). The region spanning 174 to 414 (TIPDGFEDMR…SHPPKSLFDE (241 aa)) is the NR LBD domain. Residues 403–414 (ECSHPPKSLFDE) form an AF-2 region.

The protein belongs to the nuclear hormone receptor family.

Its subcellular location is the nucleus. Its function is as follows. Transcriptional regulator. Plays a role in modulation of lifespan and immunity. This Caenorhabditis elegans protein is Nuclear hormone receptor family member nhr-209.